The primary structure comprises 979 residues: Receptor-type tyrosine-protein phosphatase-like N (979 aa).

Residues 1–34 (MRRPRRPGGLGGSGGLRLLLCLLLLSSRPGGCSA) form the signal peptide. The segment at 35–131 (VSAHGCLFDR…RPRDRSGLAP (97 aa)) is RESP18 homology domain. The Lumenal segment spans residues 35–575 (VSAHGCLFDR…QTAHSTSPMR (541 aa)). Cysteine 53 and cysteine 62 are oxidised to a cystine. Basic and acidic residues-rich tracts occupy residues 112–127 (RIPR…RDRS) and 304–323 (RAED…RGEK). Disordered stretches follow at residues 112–173 (RIPR…SSSL), 289–329 (SRAR…SPAV), and 393–439 (VEGR…ARPP). Residue serine 308 is modified to Phosphoserine. The segment covering 415 to 433 (SPTSSEVQQVPSPVSSEPP) has biased composition (low complexity). O-linked (GalNAc...) threonine glycosylation is present at threonine 441. Residues 449–575 (SPLGQSQPTV…QTAHSTSPMR (127 aa)) are sufficient for dimerization of proICA512. N-linked (GlcNAc...) asparagine glycans are attached at residues asparagine 506 and asparagine 524. Residues 576–600 (SVLLTLVALAGVAGLLVALAVALCV) traverse the membrane as a helical segment. The sufficient for dimerization of proICA512 stretch occupies residues 601–732 (RQHARQQDKE…PNTCATAQGE (132 aa)). The Cytoplasmic segment spans residues 601–979 (RQHARQQDKE…VNAILKALPQ (379 aa)). A disordered region spans residues 643-680 (NRAEGPPEPSRVSSVSSQFSDAAQASPSSHSSTPSWCE). A compositionally biased stretch (low complexity) spans 652–677 (SRVSSVSSQFSDAAQASPSSHSSTPS). In terms of domain architecture, Tyrosine-protein phosphatase spans 709-969 (LAKEWQALCA…EFALTAVAEE (261 aa)). Lysine 754 participates in a covalent cross-link: Glycyl lysine isopeptide (Lys-Gly) (interchain with G-Cter in SUMO).

This sequence belongs to the protein-tyrosine phosphatase family. Receptor class 8 subfamily. Homodimer; shown for the unprocessed protein (proICA512) in the endoplasmic reticulum and resolved during protein maturation as ICA512-TMF seems to be predominantly monomeric in secretory granules; however, ICA512-CCF interacts with ICA512-TMF disrupting the ICA512-TMF:SNTB2 complex. The isolated lumenal RESP18 homology domain has been shown to form disulfide-linked homooligomers. Interacts (via cytoplasmic domain) with phosphorylated SNTB2; this protects PTPRN against cleavage by CAPN1 to produce ICA512-CCF. Dephosphorylation of SNTB2 upon insulin stimulation disrupts the interaction and results in PTPRN cleavage. Interacts with SNX19. ICA512-CCF interacts with PIAS4; in the nucleus. Interacts with STAT5B (phosphorylated); down-regulated by ICA512-CCF sumoylation; ICA512-CCF prevents STAT5B dephosphorylation; ICA512-CCF mediates interaction of STAT5B with PIAS4. Interacts (via RESP18 homology domain) with insulin and proinsulin. Interacts with PTPRN2, PTPRA and PTPRE. Post-translationally, N-glycosylated. O-glycosylated with core 1 or possibly core 8 glycans. In terms of processing, subject to proteolytic cleavage at multiple sites. Subject to cleavage on a pair of basic residues. On exocytosis of secretory granules in pancreatic beta-cells ICA512-TMF is transiently inserted in the plasma-membrane and cleaved by mu-type calpain CPN1 to yield ICA512-CCF. Post-translationally, sumoylated at two sites including Lys-754. Sumoylation decreases interaction with STAT5. In terms of tissue distribution, expression is restricted to neuroendocrine cells. Found in pancreas, brain and pituitary.

It is found in the membrane. The protein localises to the cytoplasmic vesicle. The protein resides in the secretory vesicle membrane. Its subcellular location is the perikaryon. It localises to the cell projection. It is found in the axon. The protein localises to the synapse. The protein resides in the cell membrane. Its subcellular location is the endosome. It localises to the nucleus. In terms of biological role, plays a role in vesicle-mediated secretory processes. Required for normal accumulation of secretory vesicles in hippocampus, pituitary and pancreatic islets. Required for the accumulation of normal levels of insulin-containing vesicles and preventing their degradation. Plays a role in insulin secretion in response to glucose stimuli. Required for normal accumulation of the neurotransmitters norepinephrine, dopamine and serotonin in the brain. In females, but not in males, required for normal accumulation and secretion of pituitary hormones, such as luteinizing hormone (LH) and follicle-stimulating hormone (FSH). Required to maintain normal levels of renin expression and renin release. Seems to lack intrinsic enzyme activity. May regulate catalytic active protein-tyrosine phosphatases such as PTPRA through dimerization. ICA512-TMF regulates dynamics and exocytosis of insulin secretory granules (SGs); binding of ICA512-TMF to SNTB2/beta-2-syntrophin is proposed to restrain SGs mobility and exocytosis by tethering them to the actin cytoskeleton depending on UTRN; the function is inhibited by cytoplasmic ICA512-CFF dimerizing with ICA512-TMF and displacing SNTB2. Functionally, ICA512-CCF translocated to the nucleus promotes expression of insulin and other granule-related genes; the function implicates binding to and regulating activity of STAT5B probably by preventing its dephosphorylation and potentially by inducing its sumoylation by recruiting PIAS4. Enhances pancreatic beta-cell proliferation by converging with signaling by STAT5B and STAT3. ICA512-CCF located in the cytoplasm regulates dynamics and exocytosis of insulin secretory granules (SGs) by dimerizing with ICA512-TMF and displacing SNTB2 thus enhancing SGs mobility and exocytosis. The polypeptide is Receptor-type tyrosine-protein phosphatase-like N (PTPRN) (Homo sapiens (Human)).